A 645-amino-acid chain; its full sequence is Cytoplasmic dynein 1 intermediate chain 1 (645 aa).

Basic and acidic residues-rich tracts occupy residues 1-13 (MSDKSDLKAELER) and 20-58 (QIREEKKRKEEERKKKEADMQQKKEPVQDDSDLDRKRRE). Disordered regions lie at residues 1–58 (MSDK…KRRE) and 96–125 (MSPSSKSVSTPSEAGSQDSGDLGPLTRTLQ). The residue at position 2 (S2) is an N-acetylserine. The interaction with DCTN1 stretch occupies residues 2 to 123 (SDKSDLKAEL…SGDLGPLTRT (122 aa)). Phosphoserine is present on residues S50 and S100. A compositionally biased stretch (low complexity) spans 96–107 (MSPSSKSVSTPS). T105 carries the post-translational modification Phosphothreonine. A phosphoserine mark is found at S107, S111, and S114. Residues 147–163 (KLGVSKVTQVDFLPREV) are interaction with DYNLT1. The interval 169–221 (ETQTPLATHQSEEDEEDEEMVESKVGQDSELENQDKKQEVKEAPPRELTEEEK) is disordered. T176 is subject to Phosphothreonine. Phosphoserine occurs at positions 179 and 197. A compositionally biased stretch (basic and acidic residues) spans 189-221 (VESKVGQDSELENQDKKQEVKEAPPRELTEEEK). WD repeat units follow at residues 285–334 (SKHR…TTPE), 338–378 (HCQS…RTPV), 387–428 (AHTH…TPQE), 437–477 (SKPV…AGIG), 482–527 (GHQG…PLYS), 530–570 (DNAD…EVPT), and 576–615 (EGASALNRVRWAQAGKEVAVGDSEGRIWVYDVGELAVPHN). The residue at position 635 (S635) is a Phosphoserine.

This sequence belongs to the dynein intermediate chain family. As to quaternary structure, homodimer. The cytoplasmic dynein 1 complex consists of two catalytic heavy chains (HCs) and a number of non-catalytic subunits presented by intermediate chains (ICs), light intermediate chains (LICs) and light chains (LCs); the composition seems to vary in respect to the IC, LIC and LC composition. The heavy chain homodimer serves as a scaffold for the probable homodimeric assembly of the respective non-catalytic subunits. The ICs and LICs bind directly to the HC dimer and the LCs assemble on the IC dimer. Interacts with DYNC1H1. Interacts with DYNLT1 and DYNLT3. Interacts with DCTN1. Interacts with MCRS1; the interaction is required for the proper distribution of centriolar satellites.

Its subcellular location is the cytoplasm. It is found in the chromosome. It localises to the centromere. The protein resides in the kinetochore. The protein localises to the cytoskeleton. Its subcellular location is the spindle pole. In terms of biological role, acts as one of several non-catalytic accessory components of the cytoplasmic dynein 1 complex that are thought to be involved in linking dynein to cargos and to adapter proteins that regulate dynein function. Cytoplasmic dynein 1 acts as a motor for the intracellular retrograde motility of vesicles and organelles along microtubules. The intermediate chains mediate the binding of dynein to dynactin via its 150 kDa component (p150-glued) DCTN1. May play a role in mediating the interaction of cytoplasmic dynein with membranous organelles and kinetochores. The sequence is that of Cytoplasmic dynein 1 intermediate chain 1 (DYNC1I1) from Homo sapiens (Human).